Here is an 89-residue protein sequence, read N- to C-terminus: Small ribosomal subunit protein uS15 (89 aa).

This sequence belongs to the universal ribosomal protein uS15 family. In terms of assembly, part of the 30S ribosomal subunit. Forms a bridge to the 50S subunit in the 70S ribosome, contacting the 23S rRNA.

Functionally, one of the primary rRNA binding proteins, it binds directly to 16S rRNA where it helps nucleate assembly of the platform of the 30S subunit by binding and bridging several RNA helices of the 16S rRNA. Forms an intersubunit bridge (bridge B4) with the 23S rRNA of the 50S subunit in the ribosome. The chain is Small ribosomal subunit protein uS15 from Nocardia farcinica (strain IFM 10152).